Here is a 372-residue protein sequence, read N- to C-terminus: 4-hydroxy-3-methylbut-2-en-1-yl diphosphate synthase (flavodoxin) (372 aa).

Residues Cys270, Cys273, Cys305, and Glu312 each contribute to the [4Fe-4S] cluster site.

It belongs to the IspG family. [4Fe-4S] cluster serves as cofactor.

It carries out the reaction (2E)-4-hydroxy-3-methylbut-2-enyl diphosphate + oxidized [flavodoxin] + H2O + 2 H(+) = 2-C-methyl-D-erythritol 2,4-cyclic diphosphate + reduced [flavodoxin]. It functions in the pathway isoprenoid biosynthesis; isopentenyl diphosphate biosynthesis via DXP pathway; isopentenyl diphosphate from 1-deoxy-D-xylulose 5-phosphate: step 5/6. Functionally, converts 2C-methyl-D-erythritol 2,4-cyclodiphosphate (ME-2,4cPP) into 1-hydroxy-2-methyl-2-(E)-butenyl 4-diphosphate. This Marinobacter nauticus (strain ATCC 700491 / DSM 11845 / VT8) (Marinobacter aquaeolei) protein is 4-hydroxy-3-methylbut-2-en-1-yl diphosphate synthase (flavodoxin).